The sequence spans 239 residues: Small ribosomal subunit protein uS2c (239 aa).

The protein belongs to the universal ribosomal protein uS2 family.

The protein localises to the plastid. The protein resides in the organellar chromatophore. The chain is Small ribosomal subunit protein uS2c (rps2) from Paulinella chromatophora.